A 547-amino-acid polypeptide reads, in one-letter code: Sterol carrier protein 2 (547 aa).

Phosphoserine is present on Ser-3. N6-acetyllysine; alternate is present on Lys-132. Lys-132 carries the N6-succinyllysine; alternate modification. Lys-168 carries the post-translational modification N6-succinyllysine. Residues Lys-173 and Lys-177 each carry the N6-acetyllysine modification. Residue Lys-183 is modified to N6-acetyllysine; alternate. Residue Lys-183 is modified to N6-succinyllysine; alternate. Lys-282 is subject to N6-succinyllysine. Residues Lys-341, Lys-432, Lys-438, Lys-443, and Lys-453 each carry the N6-acetyllysine; alternate modification. N6-succinyllysine; alternate occurs at positions 341, 432, 438, 443, and 453. The SCP2 domain maps to 433–543 (ANLVFKEIEK…KLQNLQLQPG (111 aa)). The residue at position 464 (Lys-464) is an N6-succinyllysine. At Lys-470 the chain carries N6-acetyllysine; alternate. Lys-470 carries the post-translational modification N6-succinyllysine; alternate. Lys-479 is subject to N6-succinyllysine. Lys-491 is subject to N6-acetyllysine. N6-succinyllysine occurs at positions 492 and 511. Ser-516 is subject to Phosphoserine. N6-succinyllysine is present on residues Lys-522 and Lys-534. The short motif at 545 to 547 (AKL) is the Microbody targeting signal element.

It in the N-terminal section; belongs to the thiolase-like superfamily. Thiolase family. Interacts with PEX5; the interaction is essential for peroxisomal import. In terms of processing, preSCP2, a protein with a molecular mass of about 15 kDa, is processed into its mature form (SCP2) by proteolytic cleavage of a 20 residue leader sequence after translocation into peroxisomes. In terms of tissue distribution, liver, fibroblasts, and placenta.

The protein localises to the peroxisome. It is found in the cytoplasm. The protein resides in the mitochondrion. Its subcellular location is the endoplasmic reticulum. The enzyme catalyses choloyl-CoA + propanoyl-CoA = 3alpha,7alpha,12alpha-trihydroxy-24-oxo-5beta-cholestan-26-oyl-CoA + CoA. It catalyses the reaction 4,8,12-trimethyltridecanoyl-CoA + propanoyl-CoA = 3-oxopristanoyl-CoA + CoA. The catalysed reaction is an acyl-CoA + acetyl-CoA = a 3-oxoacyl-CoA + CoA. It carries out the reaction hexanoyl-CoA + acetyl-CoA = 3-oxooctanoyl-CoA + CoA. The enzyme catalyses tetradecanoyl-CoA + acetyl-CoA = 3-oxohexadecanoyl-CoA + CoA. It catalyses the reaction 3-oxohexadecanedioyl-CoA + CoA = tetradecanedioyl-CoA + acetyl-CoA. The catalysed reaction is propanoyl-CoA + tetradecanoyl-CoA = 3-oxo-2-methylhexadecanoyl-CoA + CoA. It carries out the reaction butanoyl-CoA + acetyl-CoA = 3-oxohexanoyl-CoA + CoA. The enzyme catalyses octanoyl-CoA + acetyl-CoA = 3-oxodecanoyl-CoA + CoA. It catalyses the reaction decanoyl-CoA + acetyl-CoA = 3-oxododecanoyl-CoA + CoA. The catalysed reaction is dodecanoyl-CoA + acetyl-CoA = 3-oxotetradecanoyl-CoA + CoA. It carries out the reaction hexadecanoyl-CoA + acetyl-CoA = 3-oxooctadecanoyl-CoA + CoA. The enzyme catalyses 3-oxo-(9Z-octadecenoyl)-CoA + CoA = (7Z)-hexadecenoyl-CoA + acetyl-CoA. It catalyses the reaction 7-dehydrocholesterol(in) = 7-dehydrocholesterol(out). Functionally, plays a crucial role in the peroxisomal oxidation of branched-chain fatty acids. Catalyzes the last step of the peroxisomal beta-oxidation of branched chain fatty acids and the side chain of the bile acid intermediates di- and trihydroxycoprostanic acids (DHCA and THCA). Also active with medium and long straight chain 3-oxoacyl-CoAs. Stimulates the microsomal conversion of 7-dehydrocholesterol to cholesterol and transfers phosphatidylcholine and 7-dehydrocholesterol between membrances, in vitro. Isoforms SCP2 and SCPx cooperate in peroxisomal oxidation of certain naturally occurring tetramethyl-branched fatty acyl-CoAs. Its function is as follows. Mediates the transfer of all common phospholipids, cholesterol and gangliosides from the endoplasmic reticulum to the plasma membrane. May play a role in regulating steroidogenesis. Stimulates the microsomal conversion of 7-dehydrocholesterol to cholesterol. Also binds fatty acids and fatty acyl Coenzyme A (CoA) such as phytanoyl-CoA. Involved in the regulation phospholipid synthesis in endoplasmic reticulum enhancing the incorporation of exogenous fatty acid into glycerides. Seems to stimulate the rate-limiting step in phosphatidic acid formation mediated by GPAT3. Isoforms SCP2 and SCPx cooperate in peroxisomal oxidation of certain naturally occurring tetramethyl-branched fatty acyl-CoAs. The chain is Sterol carrier protein 2 from Homo sapiens (Human).